A 438-amino-acid polypeptide reads, in one-letter code: sn-glycerol-3-phosphate-binding periplasmic protein UgpB (438 aa).

Positions 1 to 23 (MKPLHYTASALALGLALMGNAQA) are cleaved as a signal peptide. Residues Y65, E89, S144, S270, G307, Y346, and R397 each contribute to the sn-glycerol 3-phosphate site.

The protein belongs to the bacterial solute-binding protein 1 family. As to quaternary structure, the complex is composed of two ATP-binding proteins (UgpC), two transmembrane proteins (UgpA and UgpE) and a solute-binding protein (UgpB).

It is found in the periplasm. Functionally, part of the ABC transporter complex UgpBAEC involved in sn-glycerol-3-phosphate (G3P) import. Binds G3P. This Shigella dysenteriae serotype 1 (strain Sd197) protein is sn-glycerol-3-phosphate-binding periplasmic protein UgpB (ugpB).